Here is a 540-residue protein sequence, read N- to C-terminus: Terminase large subunit (540 aa).

Positions 352, 424, and 523 each coordinate Mn(2+).

Belongs to the skunavirus terminase large subunit family. In terms of assembly, interacts with the terminase small subunit; the active complex is probably heterooligomeric. It depends on Mn(2+) as a cofactor. Mg(2+) serves as cofactor.

In terms of biological role, the terminase large subunit acts as an ATP driven molecular motor necessary for viral DNA translocation into empty capsids and as an endonuclease that cuts the viral genome to initiate and to end a packaging reaction. The terminase lies at a unique vertex of the procapsid and is composed of two subunits, a small terminase subunit involved in viral DNA recognition (packaging sequence), and a large terminase subunit possessing endonucleolytic and ATPase activities. Both terminase subunits heterooligomerize and are docked on the portal protein to form the packaging machine. The terminase large subunit exhibits endonuclease activity and cleaves the viral genome concatemer. The sequence is that of Terminase large subunit from Lactococcus lactis (Lactococcus lactis bacteriophage SK1).